Here is a 337-residue protein sequence, read N- to C-terminus: Serpentine receptor class delta-50 (337 aa).

7 helical membrane passes run 10–30, 48–68, 107–127, 147–167, 202–222, 250–270, and 280–300; these read VLILTIFYNAYFLLAISSQLL, IYLFNILGLQFISTFSAFVLQ, VLFHILQTSLIACATALIIAF, QLVISYCVPLVFLICEVLSPN, SSQTLMLMIGLYGTPFIALVF, GLTLQTLLPLICYCPGFTYYI, and LFVEFAVSPYGFVYTIFDPLL.

The protein belongs to the nematode receptor-like protein srd family.

The protein localises to the membrane. This Caenorhabditis elegans protein is Serpentine receptor class delta-50.